A 502-amino-acid chain; its full sequence is Polyadenylate-binding protein, cytoplasmic and nuclear (502 aa).

RRM domains lie at 14-90 (LTIY…KKDE), 96-176 (GNIF…LYNP), 191-275 (TNCF…KGQR), and 299-376 (KNLY…YFKN).

Belongs to the polyadenylate-binding protein type-1 family.

Its subcellular location is the cytoplasm. It is found in the nucleus. Binds the poly(A) tail of mRNA. Appears to be an important mediator of the multiple roles of the poly(A) tail in mRNA biogenesis, stability and translation. The chain is Polyadenylate-binding protein, cytoplasmic and nuclear (PAB1) from Encephalitozoon cuniculi (strain GB-M1) (Microsporidian parasite).